A 329-amino-acid polypeptide reads, in one-letter code: GTP 3',8-cyclase (329 aa).

The region spanning alanine 8–alanine 234 is the Radical SAM core domain. A GTP-binding site is contributed by arginine 17. Residues cysteine 24 and cysteine 28 each contribute to the [4Fe-4S] cluster site. Tyrosine 30 provides a ligand contact to S-adenosyl-L-methionine. Cysteine 31 serves as a coordination point for [4Fe-4S] cluster. A GTP-binding site is contributed by arginine 68. Residue glycine 72 participates in S-adenosyl-L-methionine binding. Threonine 99 contacts GTP. Serine 123 is an S-adenosyl-L-methionine binding site. Lysine 160 contacts GTP. An S-adenosyl-L-methionine-binding site is contributed by methionine 194. Residues cysteine 257 and cysteine 260 each coordinate [4Fe-4S] cluster. Arginine 262–arginine 264 lines the GTP pocket. Cysteine 274 contacts [4Fe-4S] cluster.

Belongs to the radical SAM superfamily. MoaA family. In terms of assembly, monomer and homodimer. The cofactor is [4Fe-4S] cluster.

It catalyses the reaction GTP + AH2 + S-adenosyl-L-methionine = (8S)-3',8-cyclo-7,8-dihydroguanosine 5'-triphosphate + 5'-deoxyadenosine + L-methionine + A + H(+). Its pathway is cofactor biosynthesis; molybdopterin biosynthesis. Catalyzes the cyclization of GTP to (8S)-3',8-cyclo-7,8-dihydroguanosine 5'-triphosphate. The polypeptide is GTP 3',8-cyclase (Shigella dysenteriae serotype 1 (strain Sd197)).